The chain runs to 197 residues: Probable nicotinate-nucleotide adenylyltransferase (197 aa).

It belongs to the NadD family.

The enzyme catalyses nicotinate beta-D-ribonucleotide + ATP + H(+) = deamido-NAD(+) + diphosphate. It participates in cofactor biosynthesis; NAD(+) biosynthesis; deamido-NAD(+) from nicotinate D-ribonucleotide: step 1/1. In terms of biological role, catalyzes the reversible adenylation of nicotinate mononucleotide (NaMN) to nicotinic acid adenine dinucleotide (NaAD). The protein is Probable nicotinate-nucleotide adenylyltransferase of Chlorobium phaeobacteroides (strain DSM 266 / SMG 266 / 2430).